Reading from the N-terminus, the 671-residue chain is NADH-quinone oxidoreductase subunit G (671 aa).

The 78-residue stretch at 1 to 78 folds into the 2Fe-2S ferredoxin-type domain; that stretch reads MIKLNVDGSE…GMVIHTDTPM (78 aa). The [2Fe-2S] cluster site is built by Cys-34, Cys-45, Cys-48, and Cys-62. The 40-residue stretch at 78-117 folds into the 4Fe-4S His(Cys)3-ligated-type domain; the sequence is MVKKAREGVMEFLLINHPLDCPICDQGGECNLQDQAFRYG. [4Fe-4S] cluster is bound by residues His-94, Cys-98, Cys-101, Cys-107, Cys-146, Cys-149, Cys-152, and Cys-196. One can recognise a 4Fe-4S Mo/W bis-MGD-type domain in the interval 215–271; it reads LKHTASIGVHDAEGSNIRIDSRGDEVMRILPRVNEEINEEWLSDKNRFSYDGLKYQR.

Belongs to the complex I 75 kDa subunit family. [2Fe-2S] cluster serves as cofactor. [4Fe-4S] cluster is required as a cofactor.

The catalysed reaction is a quinone + NADH + 5 H(+)(in) = a quinol + NAD(+) + 4 H(+)(out). Its function is as follows. NDH-1 shuttles electrons from NADH, via FMN and iron-sulfur (Fe-S) centers, to quinones in the respiratory chain. Couples the redox reaction to proton translocation (for every two electrons transferred, four hydrogen ions are translocated across the cytoplasmic membrane), and thus conserves the redox energy in a proton gradient. In Rickettsia conorii (strain ATCC VR-613 / Malish 7), this protein is NADH-quinone oxidoreductase subunit G (nuoG).